A 354-amino-acid polypeptide reads, in one-letter code: Glutaminyl-peptide cyclotransferase (354 aa).

The N-terminal 8 residues, 1 to 8 (MRLLLRNY), are a transit peptide targeting the mitochondrion. An intrachain disulfide couples C136 to C158. D153 is a binding site for Zn(2+). E190 serves as the catalytic Proton acceptor. A Zn(2+)-binding site is contributed by E191. Residue D228 is the Proton acceptor of the active site. H318 is a binding site for Zn(2+).

It belongs to the glutaminyl-peptide cyclotransferase family.

It localises to the secreted. Its subcellular location is the mitochondrion. It carries out the reaction N-terminal L-glutaminyl-[peptide] = N-terminal 5-oxo-L-prolyl-[peptide] + NH4(+). Its activity is regulated as follows. Inhibited by imidazoles (imidazole, benzimidazole, 1-benzylimidazole, 1-methylimidazole, P150/03 and N-omega-acetylhistamine) and cysteamines (cysteamine and N-dimethylcysteamine). Inhibited by PDB50 1(3,4-dimethoxyphenyl)-3-(3-imidazol-1-ylpropyl)thiourea. Functionally, acts as a glutaminyl-peptide cyclotransferase. Responsible for the biosynthesis of pyroglutamyl peptides. Might be more efficient in the conversion of tri and tetrapeptides in vitro. Might have a relative preference for substrates containing hydrophobic amino acids in vitro. This chain is Glutaminyl-peptide cyclotransferase, found in Drosophila melanogaster (Fruit fly).